The following is a 156-amino-acid chain: Rhodanese-like domain-containing protein 17 (156 aa).

The Rhodanese domain occupies 44–146 (LDSGYTFLDV…WVNKRFPVKV (103 aa)). Cys-106 (cysteine persulfide intermediate) is an active-site residue.

The chain is Rhodanese-like domain-containing protein 17 (STR17) from Arabidopsis thaliana (Mouse-ear cress).